A 578-amino-acid chain; its full sequence is Synaptic defective enhancer 1 (578 aa).

Disordered regions lie at residues 1–62 (MGEP…RKET), 173–216 (SEQA…SMDQ), 426–457 (PPLPPPQAPFSGDCWRAQPAAPVPASVPVSSA), and 474–578 (LGLH…FSNF). Positions 444-455 (PAAPVPASVPVS) are enriched in low complexity. Pro residues-rich tracts occupy residues 481–491 (PPPPPPPPPPT) and 500–542 (IPPP…PNPN). Low complexity predominate over residues 565–578 (NQFPPQQQQSFSNF).

In terms of assembly, may interact (via C-terminus) with ssup-72; the interaction may prevent ssup-72 binding to RNA polymerase II subunit ama-1. As to expression, expressed in germline, oocytes, epidermis, pharyngeal bulb and neurons.

It localises to the nucleus. Its subcellular location is the nucleus speckle. Acts as a negative regulator of nuclear pre-mRNA 3'-end processing (mRNA polyadenylation). Plays a role in tissue-specific expression of protein isoforms by regulating differential processing of pre-mRNA 3'-end (alternative polyadenylation). In neurons, regulates alternative polyadenylation of specific mRNAs including unc-44 and dlk-1 by interacting with phosphatase ssup-72 and thus preventing ssup-72 dephosphorylation of RNA polymerase II subunit ama-1. Specifically, alters the usage of internal polyadenylation sites (PAS) to promote the production of neuron-specific unc-44 isoform and dlk-1 isoform c, both required for normal synapse and axon development. Conversely, in the epidermis, by inhibiting ssup-72 function, promotes the usage of an internal PAS preventing the production of one of unc-44 isoforms. In neurons, also negatively regulates protein levels of pre-RNA processing protein psf-2. This chain is Synaptic defective enhancer 1, found in Caenorhabditis elegans.